We begin with the raw amino-acid sequence, 303 residues long: Aspartate carbamoyltransferase catalytic subunit (303 aa).

Carbamoyl phosphate is bound by residues arginine 49 and threonine 50. Lysine 77 lines the L-aspartate pocket. Residues arginine 99, histidine 126, and glutamine 129 each coordinate carbamoyl phosphate. Residues arginine 159 and arginine 211 each contribute to the L-aspartate site. 2 residues coordinate carbamoyl phosphate: serine 252 and proline 253.

The protein belongs to the aspartate/ornithine carbamoyltransferase superfamily. ATCase family. Heterododecamer (2C3:3R2) of six catalytic PyrB chains organized as two trimers (C3), and six regulatory PyrI chains organized as three dimers (R2).

The catalysed reaction is carbamoyl phosphate + L-aspartate = N-carbamoyl-L-aspartate + phosphate + H(+). The protein operates within pyrimidine metabolism; UMP biosynthesis via de novo pathway; (S)-dihydroorotate from bicarbonate: step 2/3. In terms of biological role, catalyzes the condensation of carbamoyl phosphate and aspartate to form carbamoyl aspartate and inorganic phosphate, the committed step in the de novo pyrimidine nucleotide biosynthesis pathway. This chain is Aspartate carbamoyltransferase catalytic subunit, found in Listeria innocua serovar 6a (strain ATCC BAA-680 / CLIP 11262).